The primary structure comprises 123 residues: Plasminogen (123 aa).

The 79-residue stretch at 40–118 (DCYHGNGQSY…RWEFCNLKKC (79 aa)) folds into the Kringle domain. 3 disulfides stabilise this stretch: Cys-41/Cys-118, Cys-62/Cys-101, and Cys-90/Cys-113.

This sequence belongs to the peptidase S1 family. Plasminogen subfamily. In terms of assembly, interacts with CSPG4 and AMOT. Interacts (via the Kringle domains) with HRG; the interaction tethers PLG to the cell surface and enhances its activation. Interacts (via Kringle 4 domain) with ADA; the interaction stimulates PLG activation when in complex with DPP4. Angiostatin: Interacts with ATP5F1A; the interaction inhibits most of the angiogenic effects of angiostatin.

The protein resides in the secreted. The enzyme catalyses Preferential cleavage: Lys-|-Xaa &gt; Arg-|-Xaa, higher selectivity than trypsin. Converts fibrin into soluble products.. Converted into plasmin by plasminogen activators, both plasminogen and its activator being bound to fibrin. Cannot be activated with streptokinase. Functionally, plasmin dissolves the fibrin of blood clots and acts as a proteolytic factor in a variety of other processes including embryonic development, tissue remodeling, tumor invasion, and inflammation. In ovulation, weakens the walls of the Graafian follicle. It activates the urokinase-type plasminogen activator, collagenases and several complement zymogens, such as C1, C4 and C5. Cleavage of fibronectin and laminin leads to cell detachment and apoptosis. Also cleaves fibrin, thrombospondin and von Willebrand factor. Its role in tissue remodeling and tumor invasion may be modulated by CSPG4. Binds to cells. In Capra hircus (Goat), this protein is Plasminogen (PLG).